The chain runs to 88 residues: N-alpha-acetyltransferase 38, NatC auxiliary subunit (88 aa).

The Sm domain occupies 1-72 (MDILKLSDFI…VKTIMIDKPV (72 aa)).

As to quaternary structure, component of the N-terminal acetyltransferase C (NatC) complex, composed of the catalytic subunit Naa30/MAK3, a large auxiliary subunit Naa35/MAK10 and a small auxiliary subunit Naa38/MAK31.

In terms of biological role, component of the NatC N-terminal acetyltransferase, which associates with the ribosome to acetylate nascent protein chains in a cotranslational manner. NatC acetylates protein N-termini starting with methionine, followed by a hydrophobic or amphipathic amino acid, with amino acids at positions 3 and 4 also contributing to NatC recognition. The first 4 amino acids of cognate substrates are recognized at the Naa30/MAK3-Naa35/MAK10 interface. NatC-dependent acetylation targets various substrate proteins to specific subcellular sites, including isoform 2 of tRNA-specific methyltransferase Trm1 to the inner nuclear membrane. Catalyzes the acetylation of the N-terminal Met of ARF-like GTPase ARL3, which is required for its Golgi localization via interaction with the Golgi-localized integral membrane protein SYS1, which may serve as a receptor for acetylated ARL3. Catalyzes the acetylation of the N-terminal Met of L-A virus Gag protein. MAK31 is necessary for the structural stability of L-A double-stranded RNA-containing particles. Necessary for growth at 37 degrees Celsius as well as for maintenance of the killer plasmid. The sequence is that of N-alpha-acetyltransferase 38, NatC auxiliary subunit (MAK31) from Saccharomyces cerevisiae (strain ATCC 204508 / S288c) (Baker's yeast).